Here is a 130-residue protein sequence, read N- to C-terminus: uncharacterized protein (130 aa).

The first 19 residues, 1–19 (MKVLGNILWWAFVGFMAYA), serve as a signal peptide directing secretion.

This is an uncharacterized protein from Escherichia coli (strain K12).